A 222-amino-acid chain; its full sequence is MAAKPKLYYFNGRGRMESIRWLLAAAGVEFEEEFLETREQYEKMQKDGHLLFGQVPLVEIDGMMLTQTRAILSYLAAKYNLYGKDLKERVRIDMYADGTQDLMMMIAVAPFKTPKEKEESYDLILSRAKTRYFPVFEKILKDHGEAFLVGNQLSWADIQLLEAILMVEELSAPVLSDFPLLQAFKTRISNIPTIKKFLQPGSQRKPPPDGPYVEVVRTVLKF.

Methionine 1 carries the post-translational modification N-acetylmethionine. The 81-residue stretch at 3–83 (AKPKLYYFNG…YLAAKYNLYG (81 aa)) folds into the GST N-terminal domain. Glutathione contacts are provided by residues tyrosine 9, 53–55 (GQV), and 66–68 (TQT). The GST C-terminal domain occupies 85-208 (DLKERVRIDM…QPGSQRKPPP (124 aa)).

This sequence belongs to the GST superfamily. Alpha family. Homodimer. Post-translationally, the N-terminus is blocked.

Its subcellular location is the cytoplasm. The catalysed reaction is RX + glutathione = an S-substituted glutathione + a halide anion + H(+). Functionally, conjugation of reduced glutathione to a wide number of exogenous and endogenous hydrophobic electrophiles. The polypeptide is Glutathione S-transferase A4 (Gsta4) (Mus musculus (Mouse)).